Reading from the N-terminus, the 244-residue chain is Uridylate kinase (244 aa).

Residue 16-19 (KLSG) participates in ATP binding. Residue G58 coordinates UMP. Residues G59 and R63 each contribute to the ATP site. UMP contacts are provided by residues D78 and 139–146 (VGAPYFTT). Residues T166, Y172, and D175 each coordinate ATP.

It belongs to the UMP kinase family. Homohexamer.

It localises to the cytoplasm. The enzyme catalyses UMP + ATP = UDP + ADP. Its pathway is pyrimidine metabolism; CTP biosynthesis via de novo pathway; UDP from UMP (UMPK route): step 1/1. Inhibited by UTP. In terms of biological role, catalyzes the reversible phosphorylation of UMP to UDP. This chain is Uridylate kinase, found in Novosphingobium aromaticivorans (strain ATCC 700278 / DSM 12444 / CCUG 56034 / CIP 105152 / NBRC 16084 / F199).